The sequence spans 154 residues: Iron-sulfur cluster assembly enzyme IscU (154 aa).

It belongs to the NifU family. In terms of assembly, component of the mitochondrial core iron-sulfur cluster (ISC) assembly complex at least composed of the cystein desulfurase Nfs1, the scaffold protein IscU, the accessory protein bcn92/Isd11/Lyrm4, and probably fh/frataxin. Interacts with Nfs1. Fe(2+) is required as a cofactor. The cofactor is [2Fe-2S] cluster.

It functions in the pathway cofactor biosynthesis; iron-sulfur cluster biosynthesis. Scaffold protein for the de novo synthesis of iron-sulfur (Fe-S) clusters within mitochondria, which is required for maturation of both mitochondrial and cytoplasmic [2Fe-2S] and [4Fe-4S] proteins. Component of the mitochondrial core iron-sulfur cluster (ISC) assembly complex; regulates its activity. This is Iron-sulfur cluster assembly enzyme IscU from Drosophila melanogaster (Fruit fly).